A 235-amino-acid chain; its full sequence is Orotidine 5'-phosphate decarboxylase (235 aa).

Residues Asp-17, Lys-39, Asp-66–Thr-75, Thr-121, Arg-182, Gln-191, and Arg-212 each bind substrate. Catalysis depends on Lys-68, which acts as the Proton donor.

Belongs to the OMP decarboxylase family. Type 1 subfamily. In terms of assembly, homodimer.

It carries out the reaction orotidine 5'-phosphate + H(+) = UMP + CO2. The protein operates within pyrimidine metabolism; UMP biosynthesis via de novo pathway; UMP from orotate: step 2/2. Its function is as follows. Catalyzes the decarboxylation of orotidine 5'-monophosphate (OMP) to uridine 5'-monophosphate (UMP). This is Orotidine 5'-phosphate decarboxylase from Bartonella bacilliformis.